The sequence spans 115 residues: NADH-ubiquinone oxidoreductase chain 3 (115 aa).

Transmembrane regions (helical) follow at residues 3–23 (LPLA…IAFW), 55–75 (FFLV…LLPL), and 86–106 (LMLT…AYEW).

Belongs to the complex I subunit 3 family. Core subunit of respiratory chain NADH dehydrogenase (Complex I) which is composed of 45 different subunits. Interacts with TMEM186. Interacts with TMEM242.

It localises to the mitochondrion inner membrane. It catalyses the reaction a ubiquinone + NADH + 5 H(+)(in) = a ubiquinol + NAD(+) + 4 H(+)(out). In terms of biological role, core subunit of the mitochondrial membrane respiratory chain NADH dehydrogenase (Complex I) which catalyzes electron transfer from NADH through the respiratory chain, using ubiquinone as an electron acceptor. Essential for the catalytic activity of complex I. The sequence is that of NADH-ubiquinone oxidoreductase chain 3 from Lemur catta (Ring-tailed lemur).